Reading from the N-terminus, the 750-residue chain is Photosystem I P700 chlorophyll a apoprotein A1 (750 aa).

8 consecutive transmembrane segments (helical) span residues 70-93 (VFSA…FHGA), 156-179 (LYCT…FHYH), 195-219 (LNHH…HVSL), 291-309 (IAHH…GHMY), 346-369 (WHAQ…HHMY), 385-411 (LSLF…IFMV), 433-455 (AIIS…LYIH), and 531-549 (FLVH…LILL). Positions 573 and 582 each coordinate [4Fe-4S] cluster. 2 consecutive transmembrane segments (helical) span residues 589-610 (HVFL…HFSW) and 664-686 (LSAY…MFLF). H675 is a chlorophyll a' binding site. Residues M683 and Y691 each coordinate chlorophyll a. W692 provides a ligand contact to phylloquinone. The helical transmembrane segment at 724 to 744 (AVGVTHYLLGGIATTWAFFLA) threads the bilayer.

It belongs to the PsaA/PsaB family. In terms of assembly, the PsaA/B heterodimer binds the P700 chlorophyll special pair and subsequent electron acceptors. PSI consists of a core antenna complex that captures photons, and an electron transfer chain that converts photonic excitation into a charge separation. The eukaryotic PSI reaction center is composed of at least 11 subunits. Requires P700 is a chlorophyll a/chlorophyll a' dimer, A0 is one or more chlorophyll a, A1 is one or both phylloquinones and FX is a shared 4Fe-4S iron-sulfur center. as cofactor.

It is found in the plastid. Its subcellular location is the chloroplast thylakoid membrane. The catalysed reaction is reduced [plastocyanin] + hnu + oxidized [2Fe-2S]-[ferredoxin] = oxidized [plastocyanin] + reduced [2Fe-2S]-[ferredoxin]. Functionally, psaA and PsaB bind P700, the primary electron donor of photosystem I (PSI), as well as the electron acceptors A0, A1 and FX. PSI is a plastocyanin-ferredoxin oxidoreductase, converting photonic excitation into a charge separation, which transfers an electron from the donor P700 chlorophyll pair to the spectroscopically characterized acceptors A0, A1, FX, FA and FB in turn. Oxidized P700 is reduced on the lumenal side of the thylakoid membrane by plastocyanin. The chain is Photosystem I P700 chlorophyll a apoprotein A1 from Morus indica (Mulberry).